The following is a 130-amino-acid chain: Small ribosomal subunit protein uS9 (130 aa).

Belongs to the universal ribosomal protein uS9 family.

The polypeptide is Small ribosomal subunit protein uS9 (Tolumonas auensis (strain DSM 9187 / NBRC 110442 / TA 4)).